The following is a 673-amino-acid chain: DNA ligase (673 aa).

NAD(+) is bound by residues 33-37 (DAEYD), 82-83 (SL), and E114. Catalysis depends on K116, which acts as the N6-AMP-lysine intermediate. NAD(+) is bound by residues R137, E174, K291, and K315. Residues C409, C412, C427, and C433 each coordinate Zn(2+). The BRCT domain occupies 592 to 673 (AQEQPLAGLV…LINLLEQHNG (82 aa)).

The protein belongs to the NAD-dependent DNA ligase family. LigA subfamily. Mg(2+) serves as cofactor. Requires Mn(2+) as cofactor.

It catalyses the reaction NAD(+) + (deoxyribonucleotide)n-3'-hydroxyl + 5'-phospho-(deoxyribonucleotide)m = (deoxyribonucleotide)n+m + AMP + beta-nicotinamide D-nucleotide.. DNA ligase that catalyzes the formation of phosphodiester linkages between 5'-phosphoryl and 3'-hydroxyl groups in double-stranded DNA using NAD as a coenzyme and as the energy source for the reaction. It is essential for DNA replication and repair of damaged DNA. The protein is DNA ligase of Pseudoalteromonas translucida (strain TAC 125).